The sequence spans 212 residues: Ependymin (212 aa).

An N-terminal signal peptide occupies residues 1–20 (MRLTGLLCVALWSASAVVLA). Asn-69, Asn-92, and Asn-112 each carry an N-linked (GlcNAc...) asparagine glycan.

Belongs to the ependymin family. In terms of assembly, forms disulfide-linked dimers. Binds calcium through the terminal sialic acids. In terms of tissue distribution, EPDs are synthesized in the meninx and secreted in the cerebrospinal fluid.

Its subcellular location is the secreted. Its function is as follows. May play a role in neural plasticity. May be involved during axon regeneration. This chain is Ependymin (epd), found in Clupea harengus (Atlantic herring).